Here is an 804-residue protein sequence, read N- to C-terminus: Probable phosphoketolase (804 aa).

This sequence belongs to the XFP family. Thiamine diphosphate is required as a cofactor.

In Mycobacterium avium (strain 104), this protein is Probable phosphoketolase.